The chain runs to 642 residues: Threonine--tRNA ligase (642 aa).

In terms of domain architecture, TGS spans 1-61; it reads MPIITLPDGS…SEDANLEIIT (61 aa). Positions 243–534 are catalytic; it reads DHRKIGKALN…ITEEYAGFFP (292 aa). Zn(2+)-binding residues include cysteine 334, histidine 385, and histidine 511.

Belongs to the class-II aminoacyl-tRNA synthetase family. In terms of assembly, homodimer. Zn(2+) serves as cofactor.

The protein resides in the cytoplasm. It catalyses the reaction tRNA(Thr) + L-threonine + ATP = L-threonyl-tRNA(Thr) + AMP + diphosphate + H(+). In terms of biological role, catalyzes the attachment of threonine to tRNA(Thr) in a two-step reaction: L-threonine is first activated by ATP to form Thr-AMP and then transferred to the acceptor end of tRNA(Thr). Also edits incorrectly charged L-seryl-tRNA(Thr). This Histophilus somni (strain 2336) (Haemophilus somnus) protein is Threonine--tRNA ligase.